A 392-amino-acid chain; its full sequence is Succinate--CoA ligase [ADP-forming] subunit beta (392 aa).

The region spanning 9–247 (KEILRVCGVP…LYEEDPKEIE (239 aa)) is the ATP-grasp domain. Residues Lys-49, 56–58 (GRG), Glu-102, Gln-105, and Glu-110 each bind ATP. Residues Asn-202 and Asp-216 each coordinate Mg(2+). Substrate-binding positions include Asn-267 and 324-326 (GIM).

It belongs to the succinate/malate CoA ligase beta subunit family. In terms of assembly, heterotetramer of two alpha and two beta subunits. It depends on Mg(2+) as a cofactor.

It catalyses the reaction succinate + ATP + CoA = succinyl-CoA + ADP + phosphate. The enzyme catalyses GTP + succinate + CoA = succinyl-CoA + GDP + phosphate. It functions in the pathway carbohydrate metabolism; tricarboxylic acid cycle; succinate from succinyl-CoA (ligase route): step 1/1. Succinyl-CoA synthetase functions in the citric acid cycle (TCA), coupling the hydrolysis of succinyl-CoA to the synthesis of either ATP or GTP and thus represents the only step of substrate-level phosphorylation in the TCA. The beta subunit provides nucleotide specificity of the enzyme and binds the substrate succinate, while the binding sites for coenzyme A and phosphate are found in the alpha subunit. This is Succinate--CoA ligase [ADP-forming] subunit beta from Neorickettsia sennetsu (strain ATCC VR-367 / Miyayama) (Ehrlichia sennetsu).